Here is a 164-residue protein sequence, read N- to C-terminus: UPF0303 protein R02983 (164 aa).

It belongs to the UPF0303 family.

The protein is UPF0303 protein R02983 of Rhizobium meliloti (strain 1021) (Ensifer meliloti).